The following is a 149-amino-acid chain: Probable flagellum biosynthesis repressor protein FlbT (149 aa).

It belongs to the FlbT family.

Has a post-transcriptional repressor function in flagellum biogenesis. Associates with the 5'-UTR of fljK mRNA and promotes its degradation. The protein is Probable flagellum biosynthesis repressor protein FlbT of Rhizobium johnstonii (strain DSM 114642 / LMG 32736 / 3841) (Rhizobium leguminosarum bv. viciae).